The primary structure comprises 149 residues: Large ribosomal subunit protein uL15 (149 aa).

A compositionally biased stretch (basic residues) spans 1-29; sequence MVSHLKKTRKLRGHVSHGHGRVGKHRKGG. The disordered stretch occupies residues 1 to 38; sequence MVSHLKKTRKLRGHVSHGHGRVGKHRKGGCRGGRGKAG.

This sequence belongs to the universal ribosomal protein uL15 family.

The sequence is that of Large ribosomal subunit protein uL15 (RPL27A) from Tetrahymena thermophila.